Here is a 307-residue protein sequence, read N- to C-terminus: MGCDGGTIPKRHELVKGPKKVEKVDKDAELVAQWNYCTLSQEILRRPIVACELGRLYNKDAVIEFLLDKSAEKALGKAASHIRSIKNVTELRLSDNPAWEGDKGNTKGDKHDDLQRARFICPVVGLEMNGRHRFCFLRCCGCVFSERALKEIKAEVCHTCGAAFQEEDIIVLNGTKEDVEMLKKRMEERRLRAKLEKKTKKPKTATECASKPGTTQDSAGPSKVKSGKPEEADPDPREKKSTPAPRGAATNGSASGKVGKPPCGALKRSIADSEESETYKSIFTSHSSAKRSKEESAHWVTHTSYCF.

The segment at 193–296 (AKLEKKTKKP…SSAKRSKEES (104 aa)) is disordered. A compositionally biased stretch (basic and acidic residues) spans 227–241 (GKPEEADPDPREKKS). Position 288 is a phosphoserine (Ser-288).

It belongs to the rtf2 family. As to quaternary structure, interacts with DDI2; probably also interacts with DDI1. Undergoes proteasomal degradation, via DDI1 and DDI2. Removal from stalled replisomes and degradation are required for genome stability.

It is found in the chromosome. In terms of biological role, replication termination factor which is a component of the elongating replisome. Required for ATR pathway signaling upon DNA damage and has a positive activity during DNA replication. Might function to facilitate fork pausing at replication fork barriers like the rDNA. May be globally required to stimulate ATR signaling after the fork stalls or encounters a lesion. Interacts with nascent DNA. The protein is Replication termination factor 2 of Mus musculus (Mouse).